The primary structure comprises 485 residues: GTPase Obg (485 aa).

Residues 2–159 enclose the Obg domain; that stretch reads PRFVDRVVIH…RELTLELKTV (158 aa). Residues 160 to 341 enclose the OBG-type G domain; the sequence is ADVGLIGFPS…FIFALWDMVR (182 aa). Residues 166–173, 191–195, 212–215, 292–295, and 322–324 contribute to the GTP site; these read GFPSAGKS, FTTLV, DVPG, NKID, and STV. Mg(2+) contacts are provided by Ser173 and Thr193. Residues 359-437 form the OCT domain; the sequence is PIAVDETGFS…IGDMTFDWEP (79 aa). The tract at residues 439-485 is disordered; the sequence is TPAGVDVQMSGRGTDTRLEQTDRVSAAERKIARRERRQSTDEPGGEE. A compositionally biased stretch (basic and acidic residues) spans 452 to 468; sequence TDTRLEQTDRVSAAERK.

This sequence belongs to the TRAFAC class OBG-HflX-like GTPase superfamily. OBG GTPase family. Monomer. Mg(2+) is required as a cofactor.

It is found in the cytoplasm. In terms of biological role, an essential GTPase which binds GTP, GDP and possibly (p)ppGpp with moderate affinity, with high nucleotide exchange rates and a fairly low GTP hydrolysis rate. Plays a role in control of the cell cycle, stress response, ribosome biogenesis and in those bacteria that undergo differentiation, in morphogenesis control. This chain is GTPase Obg, found in Mycobacterium sp. (strain MCS).